The primary structure comprises 66 residues: Truncated interferon antagonist OPG039 (66 aa).

The ANK repeat unit spans residues 29-58 (HGHSALYYAIADNNMRLVCTLLNAGALKNL).

Belongs to the orthopoxvirus OPG039 family.

In Homo sapiens (Human), this protein is Truncated interferon antagonist OPG039 (OPG040).